The sequence spans 178 residues: UPF0302 protein BcerKBAB4_1445 (178 aa).

This sequence belongs to the UPF0302 family.

The protein is UPF0302 protein BcerKBAB4_1445 of Bacillus mycoides (strain KBAB4) (Bacillus weihenstephanensis).